Consider the following 95-residue polypeptide: Large ribosomal subunit protein uL23 (95 aa).

Belongs to the universal ribosomal protein uL23 family. As to quaternary structure, part of the 50S ribosomal subunit. Contacts protein L29, and trigger factor when it is bound to the ribosome.

In terms of biological role, one of the early assembly proteins it binds 23S rRNA. One of the proteins that surrounds the polypeptide exit tunnel on the outside of the ribosome. Forms the main docking site for trigger factor binding to the ribosome. In Coxiella burnetii (strain RSA 493 / Nine Mile phase I), this protein is Large ribosomal subunit protein uL23.